The sequence spans 755 residues: 3-isopropylmalate dehydratase (755 aa).

Cys-353, Cys-413, and Cys-416 together coordinate [4Fe-4S] cluster. Disordered stretches follow at residues 427–446 (GERC…GAGG), 471–493 (LTPA…ELEP), and 510–529 (DAPA…AAGM). Residues 510–528 (DAPATGASPPSPAPSDAAG) are compositionally biased toward low complexity.

The protein belongs to the aconitase/IPM isomerase family. In terms of assembly, monomer. It depends on [4Fe-4S] cluster as a cofactor.

The catalysed reaction is (2R,3S)-3-isopropylmalate = (2S)-2-isopropylmalate. It participates in amino-acid biosynthesis; L-leucine biosynthesis; L-leucine from 3-methyl-2-oxobutanoate: step 2/4. Catalyzes the isomerization between 2-isopropylmalate and 3-isopropylmalate, via the formation of 2-isopropylmaleate. The protein is 3-isopropylmalate dehydratase (LEUA) of Rhizomucor pusillus.